An 86-amino-acid polypeptide reads, in one-letter code: Large ribosomal subunit protein uL24c (86 aa).

The protein belongs to the universal ribosomal protein uL24 family. As to quaternary structure, part of the 50S ribosomal subunit.

Its subcellular location is the plastid. The protein localises to the chloroplast. Functionally, one of two assembly initiator proteins, it binds directly to the 5'-end of the 23S rRNA, where it nucleates assembly of the 50S subunit. In Heterosigma akashiwo (strain NIES-293 / 8280G21-1), this protein is Large ribosomal subunit protein uL24c (rpl24).